We begin with the raw amino-acid sequence, 379 residues long: Chaperone protein DnaJ (379 aa).

In terms of domain architecture, J spans 7–72 (CYYETLEVER…DKRAAYDRYG (66 aa)). A CR-type zinc finger spans residues 135–213 (GKTAQIEIPV…CTGSGRVTKE (79 aa)). Zn(2+)-binding residues include Cys-148, Cys-151, Cys-165, Cys-168, Cys-187, Cys-190, Cys-201, and Cys-204. CXXCXGXG motif repeat units lie at residues 148-155 (CEACSGTG), 165-172 (CSTCGGAG), 187-194 (CPSCQGRG), and 201-208 (CPSCTGSG).

This sequence belongs to the DnaJ family. As to quaternary structure, homodimer. The cofactor is Zn(2+).

It is found in the cytoplasm. In terms of biological role, participates actively in the response to hyperosmotic and heat shock by preventing the aggregation of stress-denatured proteins and by disaggregating proteins, also in an autonomous, DnaK-independent fashion. Unfolded proteins bind initially to DnaJ; upon interaction with the DnaJ-bound protein, DnaK hydrolyzes its bound ATP, resulting in the formation of a stable complex. GrpE releases ADP from DnaK; ATP binding to DnaK triggers the release of the substrate protein, thus completing the reaction cycle. Several rounds of ATP-dependent interactions between DnaJ, DnaK and GrpE are required for fully efficient folding. Also involved, together with DnaK and GrpE, in the DNA replication of plasmids through activation of initiation proteins. This Rhodopseudomonas palustris (strain ATCC BAA-98 / CGA009) protein is Chaperone protein DnaJ.